Reading from the N-terminus, the 509-residue chain is 4-aminobutyrate aminotransferase (509 aa).

Residue 166-167 (GS) participates in pyridoxal 5'-phosphate binding. A substrate-binding site is contributed by Arg-223. Residue Lys-363 is modified to N6-(pyridoxal phosphate)lysine. Thr-387 lines the pyridoxal 5'-phosphate pocket.

It belongs to the class-III pyridoxal-phosphate-dependent aminotransferase family. As to quaternary structure, homodimer. The cofactor is pyridoxal 5'-phosphate.

It localises to the cytoplasm. The enzyme catalyses 4-aminobutanoate + 2-oxoglutarate = succinate semialdehyde + L-glutamate. Its function is as follows. Deaminates gamma-aminobutyric acid (GABA) to succinate-semialdehyde, which in turn is converted to succinate by the succinate semialdehyde dehydrogenase. Not required for the utilization of GABA as nitrogen source. The chain is 4-aminobutyrate aminotransferase (GATA) from Mycosarcoma maydis (Corn smut fungus).